The sequence spans 288 residues: G1/S-specific cyclin-D2 (288 aa).

A Cyclin N-terminal domain is found at L26–A151. Residues Q264–L288 form a disordered region. S270 bears the Phosphoserine mark. At T279 the chain carries Phosphothreonine.

It belongs to the cyclin family. Cyclin D subfamily. Interacts with either CDK4 or CDK6 protein kinase to form a serine/threonine kinase holoenzyme complex. The cyclin subunit imparts substrate specificity to the complex. In terms of processing, phosphorylation at Thr-279 by MAP kinases is required for ubiquitination and degradation by the DCX(AMBRA1) complex. Ubiquitinated by the DCX(AMBRA1) complex during the transition from G1 to S cell phase, leading to its degradation: ubiquitination is dependent on Thr-279 phosphorylation. The DCX(AMBRA1) complex represents the major regulator of CCND2 stability during the G1/S transition. Polyubiquitinated by the SCF(FBXL2) complex, leading to proteasomal degradation.

The protein localises to the nucleus. It is found in the cytoplasm. The protein resides in the nucleus membrane. Regulatory component of the cyclin D2-CDK4 (DC) complex that phosphorylates and inhibits members of the retinoblastoma (RB) protein family including RB1 and regulates the cell-cycle during G(1)/S transition. Phosphorylation of RB1 allows dissociation of the transcription factor E2F from the RB/E2F complex and the subsequent transcription of E2F target genes which are responsible for the progression through the G(1) phase. Hypophosphorylates RB1 in early G(1) phase. Cyclin D-CDK4 complexes are major integrators of various mitogenenic and antimitogenic signals. This chain is G1/S-specific cyclin-D2 (Ccnd2), found in Rattus norvegicus (Rat).